Consider the following 570-residue polypeptide: Endo-1,4-beta-xylanase 5-like (570 aa).

The signal sequence occupies residues 1–23; it reads MNSIKNGFFLCMIFLLWCHVDSG. N197, N261, and N307 each carry an N-linked (GlcNAc...) asparagine glycan. Positions 202-501 constitute a GH10 domain; that stretch reads KGVVISLKQT…TQTGDVIDKL (300 aa). E332 serves as the catalytic Proton donor. N346 carries N-linked (GlcNAc...) asparagine glycosylation. The active-site Nucleophile is E439. 4 N-linked (GlcNAc...) asparagine glycosylation sites follow: N490, N515, N537, and N545.

Belongs to the glycosyl hydrolase 10 (cellulase F) family.

The enzyme catalyses Endohydrolysis of (1-&gt;4)-beta-D-xylosidic linkages in xylans.. It participates in glycan degradation; xylan degradation. Binds to and hydrolyzes insoluble and soluble xylan substrates. This is Endo-1,4-beta-xylanase 5-like from Arabidopsis thaliana (Mouse-ear cress).